A 246-amino-acid polypeptide reads, in one-letter code: Probable transcriptional regulatory protein YebC (246 aa).

Positions 1-20 are disordered; sequence MAGHSKWANTRHRKAAQDAK.

Belongs to the TACO1 family.

The protein resides in the cytoplasm. This chain is Probable transcriptional regulatory protein YebC, found in Shigella flexneri.